The following is a 344-amino-acid chain: UDP-N-acetylenolpyruvoylglucosamine reductase (344 aa).

One can recognise an FAD-binding PCMH-type domain in the interval 19 to 189 (INVTAKKIIF…IAVGIKIKKN (171 aa)). Arg165 is a catalytic residue. Residue Ser235 is the Proton donor of the active site. Residue Glu331 is part of the active site.

Belongs to the MurB family. Requires FAD as cofactor.

Its subcellular location is the cytoplasm. It catalyses the reaction UDP-N-acetyl-alpha-D-muramate + NADP(+) = UDP-N-acetyl-3-O-(1-carboxyvinyl)-alpha-D-glucosamine + NADPH + H(+). The protein operates within cell wall biogenesis; peptidoglycan biosynthesis. Its function is as follows. Cell wall formation. This chain is UDP-N-acetylenolpyruvoylglucosamine reductase, found in Buchnera aphidicola subsp. Schizaphis graminum (strain Sg).